Reading from the N-terminus, the 330-residue chain is Ribosomal RNA small subunit methyltransferase C (330 aa).

Belongs to the methyltransferase superfamily. RsmC family. Monomer.

Its subcellular location is the cytoplasm. The catalysed reaction is guanosine(1207) in 16S rRNA + S-adenosyl-L-methionine = N(2)-methylguanosine(1207) in 16S rRNA + S-adenosyl-L-homocysteine + H(+). In terms of biological role, specifically methylates the guanine in position 1207 of 16S rRNA in the 30S particle. This chain is Ribosomal RNA small subunit methyltransferase C, found in Haemophilus influenzae (strain ATCC 51907 / DSM 11121 / KW20 / Rd).